Consider the following 333-residue polypeptide: Eukaryotic translation initiation factor 2 subunit 2 (333 aa).

Disordered regions lie at residues 1–87 (MSGD…KSKK), 98–117 (IKDL…EEDL), and 141–165 (EKDE…QTGP). Serine 2 carries the post-translational modification N-acetylserine. Serine 2 and serine 13 each carry phosphoserine. Basic residues predominate over residues 13 to 22 (SKKKKKKKKP). Threonine 36 carries the post-translational modification Phosphothreonine. The segment covering 40–51 (ETKEVEPEPTED) has biased composition (basic and acidic residues). A Phosphoserine modification is found at serine 67. Lysine 102 participates in a covalent cross-link: Glycyl lysine isopeptide (Lys-Gly) (interchain with G-Cter in SUMO2). Serine 105 is modified (phosphoserine). Residues 106–117 (DVQEPAEPEEDL) are compositionally biased toward acidic residues. Phosphoserine occurs at positions 158 and 218. N6-acetyllysine is present on residues lysine 265 and lysine 293. Residues 281–305 (CHTCRSPDTILQKDTRLYFLQCETC) form a C4-type zinc finger.

This sequence belongs to the eIF-2-beta/eIF-5 family. In terms of assembly, eukaryotic translation initiation factor 2 eIF2 is a heterotrimeric complex composed of an alpha (EIF2S1), a beta (EIF2S2) and a gamma (EIF2S3) chain. eIF2 is member of the 43S pre-initiation complex (43S PIC). eIF2 forms a complex with at least CELF1/CUGBP1, CALR, CALR3, EIF2S1, EIF2S2, HSP90B1 and HSPA5. Interacts with BZW2/5MP1. Interacts with EIF5.

It is found in the cytoplasm. It localises to the cytosol. Component of the eIF2 complex that functions in the early steps of protein synthesis by forming a ternary complex with GTP and initiator tRNA. This complex binds to a 40S ribosomal subunit, followed by mRNA binding to form a 43S pre-initiation complex (43S PIC). Junction of the 60S ribosomal subunit to form the 80S initiation complex is preceded by hydrolysis of the GTP bound to eIF2 and release of an eIF2-GDP binary complex. In order for eIF2 to recycle and catalyze another round of initiation, the GDP bound to eIF2 must exchange with GTP by way of a reaction catalyzed by eIF2B. The polypeptide is Eukaryotic translation initiation factor 2 subunit 2 (EIF2S2) (Bos taurus (Bovine)).